The primary structure comprises 566 residues: Multidrug and toxin extrusion protein 1 (566 aa).

Met-1 carries the N-acetylmethionine modification. 13 consecutive transmembrane segments (helical) span residues Leu-37–Ile-57, Ala-72–Ser-92, Leu-120–Leu-140, Leu-152–Leu-172, Tyr-176–Val-196, Ala-216–Trp-236, Ser-257–Tyr-276, Ser-295–Ala-315, Ala-336–Cys-356, Ile-370–Leu-390, Ile-409–Val-429, Leu-437–Ala-457, and Gly-543–Ile-563.

The protein belongs to the multi antimicrobial extrusion (MATE) (TC 2.A.66.1) family. As to expression, highly expressed in kidney and placenta, moderately in stomach, colon, lung, spleen, skeletal muscle and prostate, and slightly in spleen. In the kidney, found in medulla and cortex, especially in the proximal convoluted and straight tubules. No expression was observed in heart, brain, small intestine and liver. Expressed in Sertoli cells in testis.

The protein localises to the cell membrane. The protein resides in the apical cell membrane. It catalyses the reaction thiamine(out) + H(+)(in) = thiamine(in) + H(+)(out). It carries out the reaction estrone 3-sulfate(in) + H(+)(out) = estrone 3-sulfate(out) + H(+)(in). The catalysed reaction is creatinine(in) + H(+)(out) = creatinine(out) + H(+)(in). The enzyme catalyses agmatine(in) + H(+)(out) = agmatine(out) + H(+)(in). Functionally, multidrug efflux pump that functions as a H(+)/organic cation antiporter. Plays a physiological role in the excretion of cationic compounds including endogenous metabolites, drugs, toxins through the kidney and liver, into urine and bile respectively. Mediates the efflux of endogenous compounds such as creatinine, vitamin B1/thiamine, agmatine and estrone-3-sulfate. May also contribute to regulate the transport of cationic compounds in testis across the blood-testis-barrier. The polypeptide is Multidrug and toxin extrusion protein 1 (Slc47a1) (Rattus norvegicus (Rat)).